The primary structure comprises 216 residues: Gas vesicle protein H (216 aa).

The disordered stretch occupies residues 1-141 (MSPNLNGPGG…IHIETRETDD (141 aa)). Positions 15–25 (DRPDEPDDSDR) are enriched in acidic residues. Composition is skewed to basic and acidic residues over residues 38 to 51 (PDDRPNKTPDRPSD), 73 to 84 (DGHRQGHGRIDR), and 107 to 141 (KPSDEPRVEAPRTEGTDSQPEGEKSIHIETRETDD).

The protein belongs to the gas vesicle GvpH family. GvpF to GvpM interact with each other in vitro, and may form multi-subunit complex(es). Interacts with GvpC. Might interact with GvpA.

It is found in the gas vesicle. In terms of biological role, proteins GvpF to GvpM might be involved in nucleating gas vesicle formation. A minor component of the gas vesicle. Gas vesicles are hollow, gas filled proteinaceous nanostructures found in some microorganisms. They allow positioning of halobacteria at the optimal depth for growth in the poorly aerated, shallow brine pools of their habitat. Expression of a 9.5 kb mc-vac DNA fragment containing 2 divergently transcribed regions (gvpD-gvpE-gvpF-gvpG-gvpH-gvpI-gvpJ-gvpK-gvpL-gvpM and gvpA-gvpC-gvpN-gvpO) allows H.volcanii to produce gas vesicles. The sequence is that of Gas vesicle protein H from Haloferax mediterranei (strain ATCC 33500 / DSM 1411 / JCM 8866 / NBRC 14739 / NCIMB 2177 / R-4) (Halobacterium mediterranei).